The following is a 209-amino-acid chain: Uracil phosphoribosyltransferase (209 aa).

5-phospho-alpha-D-ribose 1-diphosphate-binding positions include Arg-79, Arg-104, and 131 to 139 (DPMLATGGS). Residues Ile-194 and 199–201 (GDA) contribute to the uracil site. Asp-200 contributes to the 5-phospho-alpha-D-ribose 1-diphosphate binding site.

Belongs to the UPRTase family. It depends on Mg(2+) as a cofactor.

The enzyme catalyses UMP + diphosphate = 5-phospho-alpha-D-ribose 1-diphosphate + uracil. It functions in the pathway pyrimidine metabolism; UMP biosynthesis via salvage pathway; UMP from uracil: step 1/1. With respect to regulation, allosterically activated by GTP. Catalyzes the conversion of uracil and 5-phospho-alpha-D-ribose 1-diphosphate (PRPP) to UMP and diphosphate. In Geobacillus sp. (strain WCH70), this protein is Uracil phosphoribosyltransferase.